The following is a 274-amino-acid chain: tRNA-cytidine(32) 2-sulfurtransferase (274 aa).

The PP-loop motif signature appears at 40–45 (SGGKDS). [4Fe-4S] cluster is bound by residues Cys115, Cys118, and Cys206.

It belongs to the TtcA family. As to quaternary structure, homodimer. Mg(2+) serves as cofactor. Requires [4Fe-4S] cluster as cofactor.

It is found in the cytoplasm. It catalyses the reaction cytidine(32) in tRNA + S-sulfanyl-L-cysteinyl-[cysteine desulfurase] + AH2 + ATP = 2-thiocytidine(32) in tRNA + L-cysteinyl-[cysteine desulfurase] + A + AMP + diphosphate + H(+). Its pathway is tRNA modification. In terms of biological role, catalyzes the ATP-dependent 2-thiolation of cytidine in position 32 of tRNA, to form 2-thiocytidine (s(2)C32). The sulfur atoms are provided by the cysteine/cysteine desulfurase (IscS) system. This chain is tRNA-cytidine(32) 2-sulfurtransferase, found in Ectopseudomonas mendocina (strain ymp) (Pseudomonas mendocina).